The sequence spans 523 residues: NAD(P)H-quinone oxidoreductase subunit 2 (523 aa).

The next 13 membrane-spanning stretches (helical) occupy residues 30–50 (VGPE…DLAG), 57–77 (WVPP…ALQW), 94–114 (LAIA…LISW), 128–148 (AAIL…TDLV), 182–202 (LLVG…LYGL), 223–243 (AALA…AVPF), 255–275 (PTPV…ALAL), 291–311 (LLFT…ALAQ), 317–337 (MLAY…VCGT), 345–365 (VLYM…IILF), 389–409 (LGLS…GFFG), 424–444 (VLVV…IGVI), and 477–497 (VALV…NPLF).

It belongs to the complex I subunit 2 family. NDH-1 can be composed of about 15 different subunits; different subcomplexes with different compositions have been identified which probably have different functions.

Its subcellular location is the cellular thylakoid membrane. The catalysed reaction is a plastoquinone + NADH + (n+1) H(+)(in) = a plastoquinol + NAD(+) + n H(+)(out). The enzyme catalyses a plastoquinone + NADPH + (n+1) H(+)(in) = a plastoquinol + NADP(+) + n H(+)(out). Its function is as follows. NDH-1 shuttles electrons from an unknown electron donor, via FMN and iron-sulfur (Fe-S) centers, to quinones in the respiratory and/or the photosynthetic chain. The immediate electron acceptor for the enzyme in this species is believed to be plastoquinone. Couples the redox reaction to proton translocation, and thus conserves the redox energy in a proton gradient. Cyanobacterial NDH-1 also plays a role in inorganic carbon-concentration. This chain is NAD(P)H-quinone oxidoreductase subunit 2, found in Synechococcus sp. (strain CC9311).